The primary structure comprises 124 residues: Small ribosomal subunit protein uS12 (124 aa).

Residue Asp-89 is modified to 3-methylthioaspartic acid.

Belongs to the universal ribosomal protein uS12 family. Part of the 30S ribosomal subunit. Contacts proteins S8 and S17. May interact with IF1 in the 30S initiation complex.

Its function is as follows. With S4 and S5 plays an important role in translational accuracy. Interacts with and stabilizes bases of the 16S rRNA that are involved in tRNA selection in the A site and with the mRNA backbone. Located at the interface of the 30S and 50S subunits, it traverses the body of the 30S subunit contacting proteins on the other side and probably holding the rRNA structure together. The combined cluster of proteins S8, S12 and S17 appears to hold together the shoulder and platform of the 30S subunit. The sequence is that of Small ribosomal subunit protein uS12 from Moorella thermoacetica (strain ATCC 39073 / JCM 9320).